The sequence spans 365 residues: MNIMDFNVKKLAADAGTFLSRAVQFTEEKLGQAEKTELDAHLENLLSKAECTKVWTEKIMKQTEVLLQPNPNARIEEFVYEKLDRKAPSRINNPELLGQYMIDAGTEFGPGTAYGNALIKCGETQKRIGTADRELIQTSALNFLTPLRNFIEGDYKTIAKERKLLQNKRLDLDAAKTRLKKAKAAETKSSSEQELRITQSEFDRQAEITRLLLEGISSTHAHHLRCLNDFVEAQMTYYAQCYQYMLDLQKQLGSFPSNYVSNNNQTSGTPVPYTLSNTIGPSAVASTGSLVITCPPNLSDLKDSSSTRKARVLYDYDAANSTELSLLADEVITVFSVVGMDSDWLMGERGNQKGKVPITYLELLN.

N-acetylmethionine is present on M1. Residues 1 to 30 (MNIMDFNVKKLAADAGTFLSRAVQFTEEKL) form a membrane-binding amphipathic helix region. Residues 1 to 37 (MNIMDFNVKKLAADAGTFLSRAVQFTEEKLGQAEKTE) are required for membrane binding. In terms of domain architecture, BAR spans 27–261 (EEKLGQAEKT…LGSFPSNYVS (235 aa)). T145 is modified (phosphothreonine; by CDK5). A coiled-coil region spans residues 156-185 (KTIAKERKLLQNKRLDLDAAKTRLKKAKAA). The SH3 domain occupies 305–365 (SSTRKARVLY…VPITYLELLN (61 aa)).

This sequence belongs to the endophilin family. As to quaternary structure, homodimer, and heterodimer with SH3GLB2. Binds BAX; induction of apoptosis augments BAX binding. Binds DNM1, HTT, AMPH, BIN1 and ARFGAP1. Interacts with UVRAG; UVRAG bridges the interaction to BECN1 indicative for an association with the PI3K complex II (PI3KC3-C2). Post-translationally, phosphorylated at Thr-145 by CDK5; this phosphorylation is required for autophagy induction in starved neurons and facilitates homodimerization. In terms of tissue distribution, expressed in brain, heart, lung and spleen. Low level in liver and testis.

The protein localises to the cytoplasm. The protein resides in the golgi apparatus membrane. Its subcellular location is the mitochondrion outer membrane. It is found in the cytoplasmic vesicle. It localises to the autophagosome membrane. The protein localises to the midbody. May be required for normal outer mitochondrial membrane dynamics. Required for coatomer-mediated retrograde transport in certain cells. May recruit other proteins to membranes with high curvature. May promote membrane fusion. Involved in activation of caspase-dependent apoptosis by promoting BAX/BAK1 activation. Involved in caspase-independent apoptosis during nutrition starvation and involved in the regulation of autophagy. Activates lipid kinase activity of PIK3C3 during autophagy probably by associating with the PI3K complex II (PI3KC3-C2). Associated with PI3KC3-C2 during autophagy may regulate the trafficking of ATG9A from the Golgi complex to the peripheral cytoplasm for the formation of autophagosomes by inducing Golgi membrane tubulation and fragmentation. Involved in regulation of degradative endocytic trafficking and cytokinesis, probably in the context of PI3KC3-C2. The chain is Endophilin-B1 from Rattus norvegicus (Rat).